The primary structure comprises 373 residues: Mitochondrial nicotinamide adenine dinucleotide transporter 1 (373 aa).

Topologically, residues 1 to 80 (MTQTDNPVPN…WVPLSSTQIT (80 aa)) are mitochondrial matrix. Solcar repeat units lie at residues 75–166 (SSTQ…SKKF), 174–263 (FDFV…LKVR), and 276–364 (INLQ…FRNR). A helical membrane pass occupies residues 81–101 (ALSGAFAGFLSGVAVCPLDVA). The Mitochondrial intermembrane segment spans residues 102 to 141 (KTRLQAQGLQTRFENPYYRGIMGTLSTIVRDEGPRGLYKG). A helical transmembrane segment spans residues 142 to 162 (LVPIVLGYFPTWMIYFSVYEF). Residues 163–176 (SKKFFHGIFPQFDF) lie on the Mitochondrial matrix side of the membrane. A helical membrane pass occupies residues 177-199 (VAQSCAAITAGAASTTLTNPIWV). Residues 200–235 (VKTRLMLQSNLGEHPTHYKGTFDAFRKLFYQEGFKA) are Mitochondrial intermembrane-facing. A helical membrane pass occupies residues 236 to 256 (LYAGLVPSLLGLFHVAIHFPI). Residues 257–280 (YEDLKVRFHCYSRENNTNSINLQR) are Mitochondrial matrix-facing. A helical transmembrane segment spans residues 281-297 (LIMASSVSKMIASAVTY). The Mitochondrial intermembrane portion of the chain corresponds to 298–335 (PHEILRTRMQLKSDIPDSIQRRLFPLIKATYAQEGLKG). The chain crosses the membrane as a helical span at residues 336 to 358 (FYSGFTTNLVRTIPASAITLVSF). The Mitochondrial matrix portion of the chain corresponds to 359 to 373 (EYFRNRLENISTMVI).

The protein belongs to the mitochondrial carrier (TC 2.A.29) family.

The protein resides in the mitochondrion inner membrane. The catalysed reaction is dAMP(in) + NAD(+)(out) = dAMP(out) + NAD(+)(in). It carries out the reaction dGMP(in) + NAD(+)(out) = dGMP(out) + NAD(+)(in). The enzyme catalyses GMP(in) + NAD(+)(out) = GMP(out) + NAD(+)(in). It catalyses the reaction AMP(in) + NAD(+)(out) = AMP(out) + NAD(+)(in). The catalysed reaction is deamido-NAD(+)(in) + NAD(+)(out) = deamido-NAD(+)(out) + NAD(+)(in). In terms of biological role, mitochondrial inner membrane carrier protein that mediates the import of NAD(+) into mitochondria. Can transport NAD(+) by unidirectional transport or by exchange with intramitochondrially generated dAMP and dGMP. Also able to transport NAD(+) by exchange with AMP, GMP or deamido-NAD (+) in vitro. This chain is Mitochondrial nicotinamide adenine dinucleotide transporter 1 (YIA6), found in Saccharomyces cerevisiae (strain ATCC 204508 / S288c) (Baker's yeast).